Reading from the N-terminus, the 500-residue chain is Cobyric acid synthase (500 aa).

The GATase cobBQ-type domain occupies 253 to 446 (KIGVAAIYFP…FHGFFDRPEV (194 aa)). Catalysis depends on C334, which acts as the Nucleophile. Residue H438 is part of the active site.

The protein belongs to the CobB/CobQ family. CobQ subfamily.

It participates in cofactor biosynthesis; adenosylcobalamin biosynthesis. Catalyzes amidations at positions B, D, E, and G on adenosylcobyrinic A,C-diamide. NH(2) groups are provided by glutamine, and one molecule of ATP is hydrogenolyzed for each amidation. The protein is Cobyric acid synthase of Chlorobaculum tepidum (strain ATCC 49652 / DSM 12025 / NBRC 103806 / TLS) (Chlorobium tepidum).